The chain runs to 141 residues: Nucleoside diphosphate kinase (141 aa).

Residues lysine 11, phenylalanine 59, arginine 87, threonine 93, arginine 104, and asparagine 114 each contribute to the ATP site. Histidine 117 serves as the catalytic Pros-phosphohistidine intermediate.

Belongs to the NDK family. As to quaternary structure, homotetramer. Mg(2+) serves as cofactor.

The protein resides in the cytoplasm. The enzyme catalyses a 2'-deoxyribonucleoside 5'-diphosphate + ATP = a 2'-deoxyribonucleoside 5'-triphosphate + ADP. It carries out the reaction a ribonucleoside 5'-diphosphate + ATP = a ribonucleoside 5'-triphosphate + ADP. In terms of biological role, major role in the synthesis of nucleoside triphosphates other than ATP. The ATP gamma phosphate is transferred to the NDP beta phosphate via a ping-pong mechanism, using a phosphorylated active-site intermediate. This Pseudomonas entomophila (strain L48) protein is Nucleoside diphosphate kinase.